Consider the following 333-residue polypeptide: Large ribosomal subunit protein uL3 (333 aa).

2 stretches are compositionally biased toward basic residues: residues 1-10 (MGMKRNRPRR) and 17-26 (PRKRAKRPVP). The tract at residues 1–29 (MGMKRNRPRRGSLAFSPRKRAKRPVPKIR) is disordered.

This sequence belongs to the universal ribosomal protein uL3 family. As to quaternary structure, part of the 50S ribosomal subunit. Forms a cluster with proteins L14 and L24e.

Its function is as follows. One of the primary rRNA binding proteins, it binds directly near the 3'-end of the 23S rRNA, where it nucleates assembly of the 50S subunit. In Methanococcus aeolicus (strain ATCC BAA-1280 / DSM 17508 / OCM 812 / Nankai-3), this protein is Large ribosomal subunit protein uL3.